Here is a 369-residue protein sequence, read N- to C-terminus: Probable serine/threonine-protein kinase FMP48 (369 aa).

A Protein kinase domain is found at 2 to 369; the sequence is YTKLRSIQSG…EKPCLIQDGK (368 aa). ATP is bound by residues 8-16 and Lys31; that span reads IQSGTFSTV. Asp133 acts as the Proton acceptor in catalysis.

Belongs to the protein kinase superfamily. Ser/Thr protein kinase family.

The protein resides in the mitochondrion. The enzyme catalyses L-seryl-[protein] + ATP = O-phospho-L-seryl-[protein] + ADP + H(+). The catalysed reaction is L-threonyl-[protein] + ATP = O-phospho-L-threonyl-[protein] + ADP + H(+). The protein is Probable serine/threonine-protein kinase FMP48 (FMP48) of Saccharomyces cerevisiae (strain ATCC 204508 / S288c) (Baker's yeast).